We begin with the raw amino-acid sequence, 285 residues long: Phosphate import ATP-binding protein PstB (285 aa).

The ABC transporter domain occupies 39–280 (LEVSDLQLWY…PAKKQTEDYI (242 aa)). 71 to 78 (GPSGCGKS) is a binding site for ATP.

The protein belongs to the ABC transporter superfamily. Phosphate importer (TC 3.A.1.7) family. In terms of assembly, the complex is composed of two ATP-binding proteins (PstB), two transmembrane proteins (PstC and PstA) and a solute-binding protein (PstS).

Its subcellular location is the cell inner membrane. The catalysed reaction is phosphate(out) + ATP + H2O = ADP + 2 phosphate(in) + H(+). Its function is as follows. Part of the ABC transporter complex PstSACB involved in phosphate import. Responsible for energy coupling to the transport system. This Alkalilimnicola ehrlichii (strain ATCC BAA-1101 / DSM 17681 / MLHE-1) protein is Phosphate import ATP-binding protein PstB.